Reading from the N-terminus, the 541-residue chain is Amino-acid permease 2 (541 aa).

The span at 1-22 (MSFSPPNKSADATIQITEMTRQ) shows a compositional bias: polar residues. A disordered region spans residues 1–43 (MSFSPPNKSADATIQITEMTRQGTPSSGEAAASTPSTSSTESG). The segment covering 23–41 (GTPSSGEAAASTPSTSSTE) has biased composition (low complexity). The next 12 membrane-spanning stretches (helical) occupy residues 66-86 (FSFA…WIYG), 90-110 (GGAA…WALA), 139-159 (VPFL…AGGA), 188-208 (VVGV…LPTA), 214-234 (TSGY…TLLV), 255-275 (GWSP…WIMT), 301-321 (ATTF…VCMG), 347-367 (PAIF…IPGI), 399-419 (PLIA…LGLA), 424-444 (IGAV…IPII), 464-484 (VWVN…FFFP), and 496-516 (YAIV…YTHG).

It belongs to the amino acid-polyamine-organocation (APC) superfamily.

It is found in the membrane. The protein is Amino-acid permease 2 (aap-2) of Neurospora crassa (strain ATCC 24698 / 74-OR23-1A / CBS 708.71 / DSM 1257 / FGSC 987).